The primary structure comprises 209 residues: Small ribosomal subunit protein uS3 (209 aa).

A KH type-2 domain is found at 38 to 107 (IRKVIKNKYA…RFIVNVEEIK (70 aa)).

Belongs to the universal ribosomal protein uS3 family. Part of the 30S ribosomal subunit. Forms a tight complex with proteins S10 and S14.

In terms of biological role, binds the lower part of the 30S subunit head. Binds mRNA in the 70S ribosome, positioning it for translation. In Thermosipho africanus (strain TCF52B), this protein is Small ribosomal subunit protein uS3.